Reading from the N-terminus, the 122-residue chain is Holo-[acyl-carrier-protein] synthase (122 aa).

D9 and E58 together coordinate Mg(2+).

The protein belongs to the P-Pant transferase superfamily. AcpS family. Mg(2+) serves as cofactor.

It is found in the cytoplasm. The enzyme catalyses apo-[ACP] + CoA = holo-[ACP] + adenosine 3',5'-bisphosphate + H(+). In terms of biological role, transfers the 4'-phosphopantetheine moiety from coenzyme A to a Ser of acyl-carrier-protein. This Chlamydia pneumoniae (Chlamydophila pneumoniae) protein is Holo-[acyl-carrier-protein] synthase.